A 495-amino-acid chain; its full sequence is MTLNMMLDNAVPEAIAGALTQQHPGLFFTMVEQASVAISLTDARANIIYANPAFCRQTGYSLAQLLNQNPRLLASSQTPREIYQEMWQTLLQRQPWRGQLINQRRDGGLYLVDIDITPVLNPQGELEHYLAMQRDISVSYTLEQRLRNHMTLMEAVLNNIPAAVVVVDEQDRVVMDNLAYKTFCADCGGKELLVELQVSPRKMGPGAEQILPVVVRGAVRWLSVTCWALPGVSEEASRYFVDSAPARTLMVIADCTQQRQQQEQGRLDRLKQQMTAGKLLAAIRESLDAALIQLNCPINMLAAARRLNGEGSGNVALDAAWREGEEAMARLQRCRPSLELESNAVWPLQPFFDDLYALYRTRFDDRARLQVDMASPHLVGFGQRTQLLACLSLWLDRTLALAAELPSVPLEIELYAEEDEGWLSLYLNDNVPLLQVRYAHSPDALNSPGKGMELRLIQTLVAYHRGAIELASRPQGGTSLVLRFPLFNTLTGGEQ.

One can recognise a PAS 1 domain in the interval 23–93 (HPGLFFTMVE…QEMWQTLLQR (71 aa)). Residues 94–148 (QPWRGQLINQRRDGGLYLVDIDITPVLNPQGELEHYLAMQRDISVSYTLEQRLRN) enclose the PAC domain. The region spanning 151–174 (TLMEAVLNNIPAAVVVVDEQDRVV) is the PAS 2; truncated domain.

Its function is as follows. Required for the inhibition of NifA activity in response to oxygen and low level of fixed nitrogen. The sequence is that of Nitrogen fixation regulatory protein (nifL) from Klebsiella oxytoca.